Reading from the N-terminus, the 353-residue chain is Uroporphyrinogen decarboxylase (353 aa).

Residues 33–37, D82, Y158, S213, and H332 contribute to the substrate site; that span reads RQAGR.

It belongs to the uroporphyrinogen decarboxylase family. Homodimer.

It localises to the cytoplasm. The catalysed reaction is uroporphyrinogen III + 4 H(+) = coproporphyrinogen III + 4 CO2. It participates in porphyrin-containing compound metabolism; protoporphyrin-IX biosynthesis; coproporphyrinogen-III from 5-aminolevulinate: step 4/4. Catalyzes the decarboxylation of four acetate groups of uroporphyrinogen-III to yield coproporphyrinogen-III. This Gluconobacter oxydans (strain 621H) (Gluconobacter suboxydans) protein is Uroporphyrinogen decarboxylase.